The chain runs to 178 residues: MAKTAIAYKEKMKELSMLSLICSCFYPEPRNIAAYTFDDMEVKQLNKRASGQAFELILKPPSPVSEAPRTLASPKRKDVSLEEIQAKLEAAEERRKSQEAQILKQLAEKREHEREVLQKALEENNNFSRMAEEKLVLKMEQIKENREYYLASLMERLKEKERHAADVRKNKEQLELSG.

Residues 38 to 178 (DDMEVKQLNK…KNKEQLELSG (141 aa)) form the SLD domain. Residues 75 to 178 (KRKDVSLEEI…KNKEQLELSG (104 aa)) adopt a coiled-coil conformation.

The protein belongs to the stathmin family. Nervous tissue.

The protein resides in the cytoplasm. Its subcellular location is the membrane. It is found in the cell projection. It localises to the lamellipodium. This is Stathmin-2-B (stmn2-b) from Xenopus laevis (African clawed frog).